Consider the following 122-residue polypeptide: Holo-[acyl-carrier-protein] synthase (122 aa).

Residues aspartate 8 and glutamate 55 each contribute to the Mg(2+) site.

Belongs to the P-Pant transferase superfamily. AcpS family. The cofactor is Mg(2+).

The protein localises to the cytoplasm. The enzyme catalyses apo-[ACP] + CoA = holo-[ACP] + adenosine 3',5'-bisphosphate + H(+). In terms of biological role, transfers the 4'-phosphopantetheine moiety from coenzyme A to a Ser of acyl-carrier-protein. The protein is Holo-[acyl-carrier-protein] synthase of Fusobacterium nucleatum subsp. nucleatum (strain ATCC 25586 / DSM 15643 / BCRC 10681 / CIP 101130 / JCM 8532 / KCTC 2640 / LMG 13131 / VPI 4355).